Here is a 1202-residue protein sequence, read N- to C-terminus: Actin cytoskeleton-regulatory complex protein SLA1 (1202 aa).

SH3 domains follow at residues 3–70 (VFIG…VADV) and 71–132 (ISQV…PLNA). Residues 133 to 278 (ETGSAVPPSQ…DDYNDSEPSG (146 aa)) are disordered. Over residues 136 to 167 (SAVPPSQPAAAAALPPPIATSATSPPAPALTA) the composition is skewed to low complexity. Positions 179 to 190 (HSSKTNAQASDS) are enriched in polar residues. Composition is skewed to basic and acidic residues over residues 191 to 201 (GNRDYADKDLP) and 253 to 269 (QHYEDDAEDYRSSQRDD). The region spanning 380–442 (KSKKKGNVLY…PSHFIEPIQE (63 aa)) is the SH3 3 domain. Disordered regions lie at residues 462 to 518 (GGKS…KSRI), 577 to 609 (KVRGSGTSSSRQDPRESERERRRRLRENDEKDR), 622 to 661 (QKARQLLDNERTKLQEQNEQPPSKPPRPSSGMGNRSRSQS), and 749 to 770 (GSLKNNNSENQSSVGQQLLPNN). Basic and acidic residues-rich tracts occupy residues 506–518 (SKKELPNPKKSRI), 588–609 (QDPRESERERRRRLRENDEKDR), and 622–637 (QKARQLLDNERTKLQE). Polar residues-rich tracts occupy residues 652–661 (GMGNRSRSQS) and 751–770 (LKNNNSENQSSVGQQLLPNN).

It belongs to the SLA1 family. As to quaternary structure, component of the PAN1 actin cytoskeleton-regulatory complex.

It is found in the cell membrane. The protein resides in the endosome membrane. It localises to the cytoplasm. Its subcellular location is the cytoskeleton. The protein localises to the actin patch. Functionally, component of the PAN1 actin cytoskeleton-regulatory complex required for the internalization of endosomes during actin-coupled endocytosis. The complex links the site of endocytosis to the cell membrane-associated actin cytoskeleton. Mediates uptake of external molecules and vacuolar degradation of plasma membrane proteins. Plays a role in the proper organization of the cell membrane-associated actin cytoskeleton and promotes its destabilization. The protein is Actin cytoskeleton-regulatory complex protein SLA1 (SLA1) of Vanderwaltozyma polyspora (strain ATCC 22028 / DSM 70294 / BCRC 21397 / CBS 2163 / NBRC 10782 / NRRL Y-8283 / UCD 57-17) (Kluyveromyces polysporus).